The following is a 44-amino-acid chain: DVCDSLVGGRCIHNGCWCERSAPHGNCCNTGGCVWWWCPGTKWD.

Intrachain disulfides connect C3-C16, C11-C28, C18-C33, and C27-C38. 6'-bromotryptophan is present on W17. Residue P23 is modified to 4-hydroxyproline. 2 positions are modified to 6'-bromotryptophan: W36 and W37. 4-hydroxyproline is present on P39. At W43 the chain carries 6'-bromotryptophan.

Expressed by the venom duct.

The protein localises to the secreted. In terms of biological role, mu-conotoxins block voltage-gated sodium channels. This toxin reversibly blocks voltage-gated sodium channel in cephalopods, with no alteration in the voltage dependence of sodium conductance or on the kinetics of inactivation. In Californiconus californicus (California cone), this protein is Mu-conotoxin-like Cal 12.1.2h.